The chain runs to 87 residues: Small ribosomal subunit protein uS15 (87 aa).

Belongs to the universal ribosomal protein uS15 family. In terms of assembly, part of the 30S ribosomal subunit. Forms a bridge to the 50S subunit in the 70S ribosome, contacting the 23S rRNA.

Its function is as follows. One of the primary rRNA binding proteins, it binds directly to 16S rRNA where it helps nucleate assembly of the platform of the 30S subunit by binding and bridging several RNA helices of the 16S rRNA. Functionally, forms an intersubunit bridge (bridge B4) with the 23S rRNA of the 50S subunit in the ribosome. This Clostridium acetobutylicum (strain ATCC 824 / DSM 792 / JCM 1419 / IAM 19013 / LMG 5710 / NBRC 13948 / NRRL B-527 / VKM B-1787 / 2291 / W) protein is Small ribosomal subunit protein uS15.